A 209-amino-acid chain; its full sequence is uncharacterized protein (209 aa).

Positions 1-17 are cleaved as a signal peptide; it reads MKRLVTGLLALSLFLAA. Residues 17-105 are disordered; it reads ACGQDSDQQK…SNNQANNNQK (89 aa). Residue Cys18 is the site of N-palmitoyl cysteine attachment. Cys18 carries S-diacylglycerol cysteine lipidation. Positions 23 to 70 are enriched in basic and acidic residues; the sequence is DQQKDGNKEKDDKAKTEQQDKKTNDSSKDKKDNKDDSKDVNKDNKDNS. Low complexity predominate over residues 71–105; sequence ANDNQQQSNSNATNNDQNQTNNNQSSNNQANNNQK.

It is found in the cell membrane. This is an uncharacterized protein from Staphylococcus aureus (strain COL).